Here is a 65-residue protein sequence, read N- to C-terminus: Large ribosomal subunit protein bL35 (65 aa).

The interval 1 to 26 is disordered; it reads MPKMKTNKSAQKRFKKTGSGRFKCKQ. Over residues 10–26 the composition is skewed to basic residues; the sequence is AQKRFKKTGSGRFKCKQ.

It belongs to the bacterial ribosomal protein bL35 family.

This is Large ribosomal subunit protein bL35 from Hydrogenovibrio crunogenus (strain DSM 25203 / XCL-2) (Thiomicrospira crunogena).